The primary structure comprises 214 residues: Thymidylate kinase (214 aa).

Position 9–16 (9–16 (GIEGCGKT)) interacts with ATP.

The protein belongs to the thymidylate kinase family.

It carries out the reaction dTMP + ATP = dTDP + ADP. Its function is as follows. Phosphorylation of dTMP to form dTDP in both de novo and salvage pathways of dTTP synthesis. The sequence is that of Thymidylate kinase from Geotalea daltonii (strain DSM 22248 / JCM 15807 / FRC-32) (Geobacter daltonii).